Here is a 241-residue protein sequence, read N- to C-terminus: 1-(5-phosphoribosyl)-5-[(5-phosphoribosylamino)methylideneamino] imidazole-4-carboxamide isomerase (241 aa).

The active-site Proton acceptor is the Asp-10. The Proton donor role is filled by Asp-131.

It belongs to the HisA/HisF family.

The protein resides in the cytoplasm. The enzyme catalyses 1-(5-phospho-beta-D-ribosyl)-5-[(5-phospho-beta-D-ribosylamino)methylideneamino]imidazole-4-carboxamide = 5-[(5-phospho-1-deoxy-D-ribulos-1-ylimino)methylamino]-1-(5-phospho-beta-D-ribosyl)imidazole-4-carboxamide. Its pathway is amino-acid biosynthesis; L-histidine biosynthesis; L-histidine from 5-phospho-alpha-D-ribose 1-diphosphate: step 4/9. The sequence is that of 1-(5-phosphoribosyl)-5-[(5-phosphoribosylamino)methylideneamino] imidazole-4-carboxamide isomerase from Bifidobacterium longum subsp. infantis (strain ATCC 15697 / DSM 20088 / JCM 1222 / NCTC 11817 / S12).